The primary structure comprises 207 residues: Thiamine-phosphate synthase (207 aa).

Residues 36 to 40 (QLRLK) and N68 contribute to the 4-amino-2-methyl-5-(diphosphooxymethyl)pyrimidine site. Mg(2+) is bound by residues D69 and D88. Residue T107 coordinates 4-amino-2-methyl-5-(diphosphooxymethyl)pyrimidine. 134 to 136 (TGT) contributes to the 2-[(2R,5Z)-2-carboxy-4-methylthiazol-5(2H)-ylidene]ethyl phosphate binding site. 4-amino-2-methyl-5-(diphosphooxymethyl)pyrimidine is bound at residue K137. G164 serves as a coordination point for 2-[(2R,5Z)-2-carboxy-4-methylthiazol-5(2H)-ylidene]ethyl phosphate.

The protein belongs to the thiamine-phosphate synthase family. Requires Mg(2+) as cofactor.

The enzyme catalyses 2-[(2R,5Z)-2-carboxy-4-methylthiazol-5(2H)-ylidene]ethyl phosphate + 4-amino-2-methyl-5-(diphosphooxymethyl)pyrimidine + 2 H(+) = thiamine phosphate + CO2 + diphosphate. It catalyses the reaction 2-(2-carboxy-4-methylthiazol-5-yl)ethyl phosphate + 4-amino-2-methyl-5-(diphosphooxymethyl)pyrimidine + 2 H(+) = thiamine phosphate + CO2 + diphosphate. It carries out the reaction 4-methyl-5-(2-phosphooxyethyl)-thiazole + 4-amino-2-methyl-5-(diphosphooxymethyl)pyrimidine + H(+) = thiamine phosphate + diphosphate. The protein operates within cofactor biosynthesis; thiamine diphosphate biosynthesis; thiamine phosphate from 4-amino-2-methyl-5-diphosphomethylpyrimidine and 4-methyl-5-(2-phosphoethyl)-thiazole: step 1/1. In terms of biological role, condenses 4-methyl-5-(beta-hydroxyethyl)thiazole monophosphate (THZ-P) and 2-methyl-4-amino-5-hydroxymethyl pyrimidine pyrophosphate (HMP-PP) to form thiamine monophosphate (TMP). This is Thiamine-phosphate synthase from Rhodospirillum centenum (strain ATCC 51521 / SW).